The sequence spans 219 residues: Protein-L-isoaspartate O-methyltransferase 2 (219 aa).

The active site involves S60.

The protein belongs to the methyltransferase superfamily. L-isoaspartyl/D-aspartyl protein methyltransferase family.

It is found in the cytoplasm. It carries out the reaction [protein]-L-isoaspartate + S-adenosyl-L-methionine = [protein]-L-isoaspartate alpha-methyl ester + S-adenosyl-L-homocysteine. Its function is as follows. Catalyzes the methyl esterification of L-isoaspartyl residues in peptides and proteins that result from spontaneous decomposition of normal L-aspartyl and L-asparaginyl residues. It plays a role in the repair and/or degradation of damaged proteins. The polypeptide is Protein-L-isoaspartate O-methyltransferase 2 (pcm2) (Archaeoglobus fulgidus (strain ATCC 49558 / DSM 4304 / JCM 9628 / NBRC 100126 / VC-16)).